The chain runs to 515 residues: MTKRALISVSDKSGIVDFAKELKNLGWDIISTGGTKVSLDDAGVETIAIDDVTGFPEMMDGRVKTLHPNIHGGLLARRDADSHLQAAKDNNIELIDLVVVNLYPFKETILRPDVTYDLAVENIDIGGPSMLRSAAKNHASVTVVVDPADYATVLGELADASQTTFKTRQRLAAKAFRHTAAYDALIAEYFTAQVGEAKPEKLTITYDLKQAMRYGENPQQDADFYQKALPTDYSIASAKQLNGKELSFNNIRDADAAIRIIRDFKASPTVVALKHMNPCGIGQADDIETAWDYAYEADPVSIFGGIVVLNREVDAATAGKMHPIFLEIIIAPSYSEEALAILTNKKKNLRILELPFDAQAASEVEAEYTGVVGGLLVQNQDVVAENPSDWQVVTDRQPTEQEATALEFAWKAIKYVKSNGIIITNDHMTLGLGAGQTNRVGSVKIAIEQAKDHLDGAVLASDAFFPFADNIEEIAAAGIKAIIQPGGSVRDQESIDAANKHGLTMIFTGVRHFRH.

Residues 1–145 form the MGS-like domain; the sequence is MTKRALISVS…KNHASVTVVV (145 aa).

Belongs to the PurH family.

The catalysed reaction is (6R)-10-formyltetrahydrofolate + 5-amino-1-(5-phospho-beta-D-ribosyl)imidazole-4-carboxamide = 5-formamido-1-(5-phospho-D-ribosyl)imidazole-4-carboxamide + (6S)-5,6,7,8-tetrahydrofolate. The enzyme catalyses IMP + H2O = 5-formamido-1-(5-phospho-D-ribosyl)imidazole-4-carboxamide. It functions in the pathway purine metabolism; IMP biosynthesis via de novo pathway; 5-formamido-1-(5-phospho-D-ribosyl)imidazole-4-carboxamide from 5-amino-1-(5-phospho-D-ribosyl)imidazole-4-carboxamide (10-formyl THF route): step 1/1. Its pathway is purine metabolism; IMP biosynthesis via de novo pathway; IMP from 5-formamido-1-(5-phospho-D-ribosyl)imidazole-4-carboxamide: step 1/1. This chain is Bifunctional purine biosynthesis protein PurH, found in Streptococcus agalactiae serotype Ia (strain ATCC 27591 / A909 / CDC SS700).